A 461-amino-acid chain; its full sequence is Porin AaxA (461 aa).

A signal peptide spans 1 to 22 (MSFRSILLTALLSLSFTNTMQA).

It belongs to the OprB family.

The protein resides in the cell outer membrane. Its function is as follows. Facilitates L-arginine uptake, as part of the AaxABC system. The arginine uptake by the bacterium in the macrophage may be a virulence factor against the host innate immune response. This Chlamydia muridarum (strain MoPn / Nigg) protein is Porin AaxA (aaxA).